A 248-amino-acid polypeptide reads, in one-letter code: Tropomyosin alpha-4 chain (248 aa).

At A2 the chain carries N-acetylalanine. A coiled-coil region spans residues 2–248 (AGLNSLEAVK…DQTLDELNCI (247 aa)). S6 carries the phosphoserine modification. The segment at 16 to 47 (ALQQQADEAEDRAQGLQRELDGERERREKAEG) is disordered. Basic and acidic residues predominate over residues 33–47 (RELDGERERREKAEG). Residues K177 and K215 each carry the N6-acetyllysine modification. At T216 the chain carries Phosphothreonine.

This sequence belongs to the tropomyosin family. As to quaternary structure, homodimer. Heterodimer of an alpha (TPM1, TPM3 or TPM4) and a beta (TPM2) chain.

It localises to the cytoplasm. The protein resides in the cytoskeleton. Binds to actin filaments in muscle and non-muscle cells. Plays a central role, in association with the troponin complex, in the calcium dependent regulation of vertebrate striated muscle contraction. Smooth muscle contraction is regulated by interaction with caldesmon. In non-muscle cells is implicated in stabilizing cytoskeleton actin filaments. Binds calcium. The protein is Tropomyosin alpha-4 chain (TPM4) of Equus caballus (Horse).